A 383-amino-acid chain; its full sequence is Prokineticin receptor 2 (383 aa).

Over 1-54 (MGDQNGNTSFAPDLNPPQDHVSLLPLNYSYGDYDIPLDDDEDVTKTQTFFAAKI) the chain is Extracellular. N-linked (GlcNAc...) asparagine glycosylation is found at Asn7 and Asn27. Residues 55–75 (VIGVALAGIMLVCGVGNFVFI) form a helical membrane-spanning segment. Topologically, residues 76–89 (AALARYKKLRNLTN) are cytoplasmic. A helical membrane pass occupies residues 90–110 (LLIANLAISDFLVAIVCCPFE). The Extracellular segment spans residues 111 to 136 (MDYYVVRQLSWEHGHVLCASVNYLRT). A disulfide bridge links Cys128 with Cys207. Residues 137–157 (VSLYVSTNALLAIAIDRYLAI) traverse the membrane as a helical segment. Topologically, residues 158-170 (VHPLKRMNYQTAS) are cytoplasmic. A helical transmembrane segment spans residues 171–191 (FLIALVWMVSILIAIPSAYFT). The Extracellular segment spans residues 192–222 (TETILVIVKNQEKLFCGQIWPVDQQLYYKSY). A helical transmembrane segment spans residues 223–243 (FLFVFGLEFVGPVVTMTLCYA). The Cytoplasmic portion of the chain corresponds to 244–272 (RISQELWFKAVPGFQTEQIRKRLRCRRKT). The helical transmembrane segment at 273–293 (VLLLMGILTAYVLCWAPFYGF) threads the bilayer. Residues 294–312 (TIVRDFFPTLVVKEKHYLT) lie on the Extracellular side of the membrane. Residues 313 to 333 (AFYVVECIAMSNSMINTICFV) traverse the membrane as a helical segment. Over 334-383 (TVKNNTMKYFKKMLLLHWRPSHYGSKSSADLDLKTSGVPATEEVDCIRLK) the chain is Cytoplasmic.

The protein belongs to the G-protein coupled receptor 1 family. As to quaternary structure, homodimer. As to expression, abundantly expressed in the CNS and reproductive organs with the highest levels in the cerebrum, cerebellum, testis and ovary.

The protein localises to the cell membrane. Receptor for prokineticin 2. Exclusively coupled to the G(q) subclass of heteromeric G proteins. Activation leads to mobilization of calcium, stimulation of phosphoinositide turnover and activation of p44/p42 mitogen-activated protein kinase. The sequence is that of Prokineticin receptor 2 (Prokr2) from Rattus norvegicus (Rat).